Consider the following 692-residue polypeptide: MAREFSLEKTRNIGIMAHIDAGKTTTTERILFYTGRVHKIGEVHEGAATMDWMEQEQERGITITSAATTAQWKGHRINIIDTPGHVDFTVEVERSLRVLDGAITVLDAQSGVEPQTETVWRQATTYGVPRIVFVNKMDKIGADFLYSVKTLHDRLQANAHPVQLPIGAEDQFSGIIDLVEMCAYHYHDELGKNIERIDIPEEYRDMAEEYHNKLIEAVAELDEELMMKYLEGEEITTEELKAAIRKATISVEFFPVFCGSAFKNKGVQLLLDGVVDYLPSPVDIPAIRGVVPDTEEEVTREASDDAPFAALAFKIMTDPYVGKLTFIRVYSGTLDSGSYVMNTTKGKRERIGRLLQMHANHRQEISKVYAGDIAAAVGLKDTTTGDTLCDEKHPVILESMQFPEPVISVAIEPKSKADQDKMSQALQKLQEEDPTFRAHTDPETGQTIISGMGELHLDIIVDRMRREFKVEANVGAPQVAYRETFRKSAQVEGKFIRQSGGRGQYGHVWIEFSPNERGKGFEFENAIVGGVVPKEYVPAVQAGLEEAMQNGVLAGYPVVDIKAKLFDGSYHDVDSSEMAFKIAASLALKNAATKCDPVLLEPIMKVEVVIPEEYLGDIMGDITSRRGRIEGMEARGNAQVVRAMVPMAEMFGYATSLRSNTQGRGTFSMVFDHYEEVPKNIADEIIKKNKGE.

The tr-type G domain occupies Glu8 to Val282. Residues Ala17–Thr24, Asp81–His85, and Asn135–Asp138 contribute to the GTP site.

This sequence belongs to the TRAFAC class translation factor GTPase superfamily. Classic translation factor GTPase family. EF-G/EF-2 subfamily.

It is found in the cytoplasm. Catalyzes the GTP-dependent ribosomal translocation step during translation elongation. During this step, the ribosome changes from the pre-translocational (PRE) to the post-translocational (POST) state as the newly formed A-site-bound peptidyl-tRNA and P-site-bound deacylated tRNA move to the P and E sites, respectively. Catalyzes the coordinated movement of the two tRNA molecules, the mRNA and conformational changes in the ribosome. This is Elongation factor G from Geobacillus kaustophilus (strain HTA426).